Consider the following 84-residue polypeptide: Sec-independent protein translocase protein TatA (84 aa).

The chain crosses the membrane as a helical span at residues 1-21; the sequence is MGGLQPWHWLIVIAVFVLLFG. Residues 46 to 84 form a disordered region; the sequence is MQSDSNAAKSDQPEQITSERVVVDPSTQSTSSNSDKRPA. Positions 48–63 are enriched in polar residues; it reads SDSNAAKSDQPEQITS.

The protein belongs to the TatA/E family. As to quaternary structure, the Tat system comprises two distinct complexes: a TatABC complex, containing multiple copies of TatA, TatB and TatC subunits, and a separate TatA complex, containing only TatA subunits. Substrates initially bind to the TatABC complex, which probably triggers association of the separate TatA complex to form the active translocon.

It is found in the cell membrane. Part of the twin-arginine translocation (Tat) system that transports large folded proteins containing a characteristic twin-arginine motif in their signal peptide across membranes. TatA could form the protein-conducting channel of the Tat system. The chain is Sec-independent protein translocase protein TatA from Mycolicibacterium gilvum (strain PYR-GCK) (Mycobacterium gilvum (strain PYR-GCK)).